Reading from the N-terminus, the 417-residue chain is NADH-quinone oxidoreductase subunit D (417 aa).

Belongs to the complex I 49 kDa subunit family. NDH-1 is composed of 14 different subunits. Subunits NuoB, C, D, E, F, and G constitute the peripheral sector of the complex.

It localises to the cell inner membrane. It carries out the reaction a quinone + NADH + 5 H(+)(in) = a quinol + NAD(+) + 4 H(+)(out). Its function is as follows. NDH-1 shuttles electrons from NADH, via FMN and iron-sulfur (Fe-S) centers, to quinones in the respiratory chain. The immediate electron acceptor for the enzyme in this species is believed to be ubiquinone. Couples the redox reaction to proton translocation (for every two electrons transferred, four hydrogen ions are translocated across the cytoplasmic membrane), and thus conserves the redox energy in a proton gradient. The polypeptide is NADH-quinone oxidoreductase subunit D (Dechloromonas aromatica (strain RCB)).